We begin with the raw amino-acid sequence, 369 residues long: Dual-specificity RNA methyltransferase RlmN (369 aa).

The active-site Proton acceptor is Glu-96. Residues 102 to 338 enclose the Radical SAM core domain; that stretch reads DGERGTLCVS…VTTIRTTRGD (237 aa). Cys-109 and Cys-344 are joined by a disulfide. [4Fe-4S] cluster is bound by residues Cys-116, Cys-120, and Cys-123. Residues 169–170, Ser-201, 223–225, and Asn-301 each bind S-adenosyl-L-methionine; these read GE and SLH. Catalysis depends on Cys-344, which acts as the S-methylcysteine intermediate.

The protein belongs to the radical SAM superfamily. RlmN family. [4Fe-4S] cluster serves as cofactor.

It localises to the cytoplasm. It catalyses the reaction adenosine(2503) in 23S rRNA + 2 reduced [2Fe-2S]-[ferredoxin] + 2 S-adenosyl-L-methionine = 2-methyladenosine(2503) in 23S rRNA + 5'-deoxyadenosine + L-methionine + 2 oxidized [2Fe-2S]-[ferredoxin] + S-adenosyl-L-homocysteine. It carries out the reaction adenosine(37) in tRNA + 2 reduced [2Fe-2S]-[ferredoxin] + 2 S-adenosyl-L-methionine = 2-methyladenosine(37) in tRNA + 5'-deoxyadenosine + L-methionine + 2 oxidized [2Fe-2S]-[ferredoxin] + S-adenosyl-L-homocysteine. Specifically methylates position 2 of adenine 2503 in 23S rRNA and position 2 of adenine 37 in tRNAs. m2A2503 modification seems to play a crucial role in the proofreading step occurring at the peptidyl transferase center and thus would serve to optimize ribosomal fidelity. This is Dual-specificity RNA methyltransferase RlmN from Marinobacter nauticus (strain ATCC 700491 / DSM 11845 / VT8) (Marinobacter aquaeolei).